We begin with the raw amino-acid sequence, 104 residues long: Large ribosomal subunit protein bL21c (104 aa).

This sequence belongs to the bacterial ribosomal protein bL21 family. As to quaternary structure, part of the 50S ribosomal subunit.

The protein resides in the plastid. The protein localises to the chloroplast. Functionally, this protein binds to 23S rRNA. The protein is Large ribosomal subunit protein bL21c of Porphyra purpurea (Red seaweed).